Reading from the N-terminus, the 79-residue chain is Phosphoribosylformylglycinamidine synthase subunit PurS (79 aa).

It belongs to the PurS family. In terms of assembly, homodimer. Part of the FGAM synthase complex composed of 1 PurL, 1 PurQ and 2 PurS subunits.

The protein localises to the cytoplasm. It carries out the reaction N(2)-formyl-N(1)-(5-phospho-beta-D-ribosyl)glycinamide + L-glutamine + ATP + H2O = 2-formamido-N(1)-(5-O-phospho-beta-D-ribosyl)acetamidine + L-glutamate + ADP + phosphate + H(+). The protein operates within purine metabolism; IMP biosynthesis via de novo pathway; 5-amino-1-(5-phospho-D-ribosyl)imidazole from N(2)-formyl-N(1)-(5-phospho-D-ribosyl)glycinamide: step 1/2. In terms of biological role, part of the phosphoribosylformylglycinamidine synthase complex involved in the purines biosynthetic pathway. Catalyzes the ATP-dependent conversion of formylglycinamide ribonucleotide (FGAR) and glutamine to yield formylglycinamidine ribonucleotide (FGAM) and glutamate. The FGAM synthase complex is composed of three subunits. PurQ produces an ammonia molecule by converting glutamine to glutamate. PurL transfers the ammonia molecule to FGAR to form FGAM in an ATP-dependent manner. PurS interacts with PurQ and PurL and is thought to assist in the transfer of the ammonia molecule from PurQ to PurL. The sequence is that of Phosphoribosylformylglycinamidine synthase subunit PurS from Mycobacterium leprae (strain TN).